The primary structure comprises 291 residues: Light-independent protochlorophyllide reductase iron-sulfur ATP-binding protein (291 aa).

Residues 10 to 15 and Lys39 each bind ATP; that span reads GIGKST. Ser14 lines the Mg(2+) pocket. Residues Cys95 and Cys129 each coordinate [4Fe-4S] cluster. Position 180–181 (180–181) interacts with ATP; sequence NR.

The protein belongs to the NifH/BchL/ChlL family. Homodimer. Protochlorophyllide reductase is composed of three subunits; ChlL, ChlN and ChlB. The cofactor is [4Fe-4S] cluster.

The protein resides in the plastid. Its subcellular location is the chloroplast. It carries out the reaction chlorophyllide a + oxidized 2[4Fe-4S]-[ferredoxin] + 2 ADP + 2 phosphate = protochlorophyllide a + reduced 2[4Fe-4S]-[ferredoxin] + 2 ATP + 2 H2O. Its pathway is porphyrin-containing compound metabolism; chlorophyll biosynthesis (light-independent). Component of the dark-operative protochlorophyllide reductase (DPOR) that uses Mg-ATP and reduced ferredoxin to reduce ring D of protochlorophyllide (Pchlide) to form chlorophyllide a (Chlide). This reaction is light-independent. The L component serves as a unique electron donor to the NB-component of the complex, and binds Mg-ATP. The polypeptide is Light-independent protochlorophyllide reductase iron-sulfur ATP-binding protein (Larix decidua (European larch)).